The chain runs to 164 residues: Phosphatidyl-N-methylethanolamine N-methyltransferase (164 aa).

The helical intramembrane region spans 1–21 (MGLLAAIGVLLPFPFYWWLWT). At 22–30 (NAQSWVNLC) the chain is on the lumenal side. The helical transmembrane segment at 31–52 (GRERDPSTVMARVSHVLKAAQL) threads the bilayer. The Cytoplasmic segment spans residues 53 to 69 (LSLFSVASLSWPPPLYF). The chain crosses the membrane as a helical span at residues 70 to 90 (WPLMAFGQFLNFRVYQLLGEA). 74–76 (AFG) contributes to the S-adenosyl-L-methionine binding site. Topologically, residues 91-131 (GTYYGVRFGKNIPWVTEFPFGVIRDPQYVGSIMSLLACLSW) are lumenal. The chain crosses the membrane as a helical span at residues 132-151 (VPFQYILLWSLGYVFMMFLE). The Cytoplasmic portion of the chain corresponds to 152-164 (SKEDPNARAKSIS). 154–155 (ED) lines the S-adenosyl-L-methionine pocket.

The protein belongs to the class VI-like SAM-binding methyltransferase superfamily. PEMT/PEM2 methyltransferase family.

The protein resides in the endoplasmic reticulum membrane. The enzyme catalyses a 1,2-diacyl-sn-glycero-3-phospho-N-methylethanolamine + S-adenosyl-L-methionine = a 1,2-diacyl-sn-glycero-3-phospho-N,N-dimethylethanolamine + S-adenosyl-L-homocysteine + H(+). It catalyses the reaction a 1,2-diacyl-sn-glycero-3-phospho-N,N-dimethylethanolamine + S-adenosyl-L-methionine = a 1,2-diacyl-sn-glycero-3-phosphocholine + S-adenosyl-L-homocysteine + H(+). Its pathway is phospholipid metabolism; phosphatidylcholine biosynthesis. In terms of biological role, catalyzes the second two steps of the methylation pathway of phosphatidylcholine biosynthesis, the SAM-dependent methylation of phosphatidylmonomethylethanolamine (PMME) to phosphatidyldimethylethanolamine (PDME) and of PDME to phosphatidylcholine (PC). This is Phosphatidyl-N-methylethanolamine N-methyltransferase (PLMT) from Arabidopsis thaliana (Mouse-ear cress).